The chain runs to 332 residues: Anthranilate phosphoribosyltransferase (332 aa).

5-phospho-alpha-D-ribose 1-diphosphate-binding positions include Gly80, 83–84 (GD), Thr88, 90–93 (NLST), 108–116 (KHGNRSASG), and Ser120. An anthranilate-binding site is contributed by Gly80. Ser92 lines the Mg(2+) pocket. Asn111 contacts anthranilate. Position 166 (Arg166) interacts with anthranilate. Positions 224 and 225 each coordinate Mg(2+).

The protein belongs to the anthranilate phosphoribosyltransferase family. Homodimer. It depends on Mg(2+) as a cofactor.

It carries out the reaction N-(5-phospho-beta-D-ribosyl)anthranilate + diphosphate = 5-phospho-alpha-D-ribose 1-diphosphate + anthranilate. It functions in the pathway amino-acid biosynthesis; L-tryptophan biosynthesis; L-tryptophan from chorismate: step 2/5. In terms of biological role, catalyzes the transfer of the phosphoribosyl group of 5-phosphorylribose-1-pyrophosphate (PRPP) to anthranilate to yield N-(5'-phosphoribosyl)-anthranilate (PRA). This chain is Anthranilate phosphoribosyltransferase, found in Pyrobaculum calidifontis (strain DSM 21063 / JCM 11548 / VA1).